The sequence spans 702 residues: MRLVKQEYVLDGLDCSNCARKIENGVKGIKGINGCAVNFAASTLTVSADGKEEQWVTNKVEKKVKSIDPHVTVRQKHIKKSADDGYRNRMVNMLIRMAAAVILGAAAYLVQSGTIEFFLFLGAYLIIGGDIIIRAVKNIIRGQVFDEHFLMALATIGAFLIQQYPEGVAVMLFYQIGELFQGAAVSRSRKSISALMDIRPDYANLKTKNGIEQVSSEDVQTGDIIVVNPGESIPLDGKVVQGSAMVDTSALTGESVPRKAAEGQDVMSGFINQNGVLHIEVTKGYQESAVSKILDLVQNASSRKARTENFITKFAKYYTPAVVIIAVLLAFVPPLVLSGAALSDWVYRALIFLVISCPCALVVSIPLGFFGGIGAASKAGVLVKGSNYLEALNQVKYAVFDKTGTLTKGSFEVTEIKPAEGFTKDRLLEAAAYAELHSQHPIAESVRKAYGKMLSSDEIESYEEISGHGIFAKVNGTEILAGNKKLMEREQIEDVPDENAGTIVHVAVDQRYAGAIIIADEIKEDAAQAVADLKSLGIKQTAMLTGDSKQTGEAVGKQLGIGEVYAELLPQDKVAQVEALEAKLLPSEKLIFVGDGINDTPVLARADIGVAMGGLGSDAAVEAADIVLMTDQPSKIAEAIRIAKRTRRIVWQNIGFALGVKAIFLILGAFGIATMWEAVFSDVGVTLLAVANAMRVMRLKNK.

The Cytoplasmic portion of the chain corresponds to 1-86; the sequence is MRLVKQEYVL…HIKKSADDGY (86 aa). The 69-residue stretch at 4 to 72 folds into the HMA domain; that stretch reads VKQEYVLDGL…KVKSIDPHVT (69 aa). Cd(2+) is bound by residues Cys-15 and Cys-18. 2 residues coordinate Co(2+): Cys-15 and Cys-18. Zn(2+) is bound by residues Cys-15 and Cys-18. A helical membrane pass occupies residues 87–107; sequence RNRMVNMLIRMAAAVILGAAA. The Extracellular segment spans residues 108 to 116; the sequence is YLVQSGTIE. The chain crosses the membrane as a helical span at residues 117-136; the sequence is FFLFLGAYLIIGGDIIIRAV. The Cytoplasmic segment spans residues 137-143; it reads KNIIRGQ. Residues 144-163 form a helical membrane-spanning segment; that stretch reads VFDEHFLMALATIGAFLIQQ. The Extracellular portion of the chain corresponds to 164-166; that stretch reads YPE. The chain crosses the membrane as a helical span at residues 167–186; the sequence is GVAVMLFYQIGELFQGAAVS. Residues 187 to 320 lie on the Cytoplasmic side of the membrane; it reads RSRKSISALM…ITKFAKYYTP (134 aa). The chain crosses the membrane as a helical span at residues 321-339; the sequence is AVVIIAVLLAFVPPLVLSG. The Extracellular segment spans residues 340 to 345; the sequence is AALSDW. Residues 346-363 traverse the membrane as a helical segment; sequence VYRALIFLVISCPCALVV. At 364–648 the chain is on the cytoplasmic side; that stretch reads SIPLGFFGGI…AIRIAKRTRR (285 aa). The 4-aspartylphosphate intermediate role is filled by Asp-401. Residues Asp-595 and Asp-599 each contribute to the Mg(2+) site. Residues 649 to 670 form a helical membrane-spanning segment; the sequence is IVWQNIGFALGVKAIFLILGAF. Residues 671–678 lie on the Extracellular side of the membrane; that stretch reads GIATMWEA. Residues 679 to 694 form a helical membrane-spanning segment; that stretch reads VFSDVGVTLLAVANAM. At 695–702 the chain is on the cytoplasmic side; that stretch reads RVMRLKNK.

It belongs to the cation transport ATPase (P-type) (TC 3.A.3) family. Type IB subfamily.

The protein resides in the cell membrane. It catalyses the reaction Zn(2+)(in) + ATP + H2O = Zn(2+)(out) + ADP + phosphate + H(+). The enzyme catalyses Cd(2+)(in) + ATP + H2O = Cd(2+)(out) + ADP + phosphate + H(+). Its function is as follows. Couples the hydrolysis of ATP with the transport of cadmium, zinc and cobalt out of the cell. Does not seem to transport copper. The sequence is that of Cadmium, zinc and cobalt-transporting ATPase (cadA) from Bacillus subtilis (strain 168).